Reading from the N-terminus, the 659-residue chain is Alpha-galactosidase D (659 aa).

The signal sequence occupies residues 1-20 (MRALVPMVVAATALASPAPA). Residues asparagine 48, asparagine 86, and asparagine 130 are each glycosylated (N-linked (GlcNAc...) asparagine). Cysteine 125 and cysteine 158 are joined by a disulfide. Aspartate 156 acts as the Nucleophile in catalysis. An N-linked (GlcNAc...) asparagine glycan is attached at asparagine 183. 201–205 (EWGID) is a binding site for substrate. The Proton donor role is filled by aspartate 223. N-linked (GlcNAc...) asparagine glycans are attached at residues asparagine 438, asparagine 450, asparagine 484, asparagine 551, and asparagine 583.

It belongs to the glycosyl hydrolase 27 family.

It localises to the secreted. It catalyses the reaction Hydrolysis of terminal, non-reducing alpha-D-galactose residues in alpha-D-galactosides, including galactose oligosaccharides, galactomannans and galactolipids.. Hydrolyzes a variety of simple alpha-D-galactoside as well as more complex molecules such as oligosaccharides and polysaccharides. Active on paranitrophenyl-alpha-galactoside but not on raffinose, locust bean gum and gum guar. The sequence is that of Alpha-galactosidase D (aglD) from Emericella nidulans (strain FGSC A4 / ATCC 38163 / CBS 112.46 / NRRL 194 / M139) (Aspergillus nidulans).